The sequence spans 131 residues: Bypass of stop codon protein 4 (131 aa).

This chain is Bypass of stop codon protein 4 (BSC4), found in Saccharomyces cerevisiae (strain ATCC 204508 / S288c) (Baker's yeast).